The following is a 363-amino-acid chain: Phospho-N-acetylmuramoyl-pentapeptide-transferase (363 aa).

The next 10 membrane-spanning stretches (helical) occupy residues 3 to 23, 55 to 75, 76 to 96, 116 to 136, 158 to 178, 190 to 210, 237 to 257, 261 to 281, 286 to 306, and 340 to 360; these read TVLI…PLYI, VVII…TGAL, PTVS…VGFL, LAGQ…FPAA, LAVF…LIIT, GLDG…VLIC, LAVV…WNAS, IFMG…LAIL, ILLV…ILQV, and FWII…AEWV.

This sequence belongs to the glycosyltransferase 4 family. MraY subfamily. Requires Mg(2+) as cofactor.

It is found in the cell membrane. The enzyme catalyses UDP-N-acetyl-alpha-D-muramoyl-L-alanyl-gamma-D-glutamyl-meso-2,6-diaminopimeloyl-D-alanyl-D-alanine + di-trans,octa-cis-undecaprenyl phosphate = di-trans,octa-cis-undecaprenyl diphospho-N-acetyl-alpha-D-muramoyl-L-alanyl-D-glutamyl-meso-2,6-diaminopimeloyl-D-alanyl-D-alanine + UMP. It participates in cell wall biogenesis; peptidoglycan biosynthesis. Functionally, catalyzes the initial step of the lipid cycle reactions in the biosynthesis of the cell wall peptidoglycan: transfers peptidoglycan precursor phospho-MurNAc-pentapeptide from UDP-MurNAc-pentapeptide onto the lipid carrier undecaprenyl phosphate, yielding undecaprenyl-pyrophosphoryl-MurNAc-pentapeptide, known as lipid I. The chain is Phospho-N-acetylmuramoyl-pentapeptide-transferase from Kineococcus radiotolerans (strain ATCC BAA-149 / DSM 14245 / SRS30216).